The chain runs to 687 residues: Translation initiation factor IF-2 (687 aa).

The tr-type G domain occupies 186–355; the sequence is KRPPIVTVMG…LLTAEMLELK (170 aa). The tract at residues 195-202 is G1; sequence GHVDHGKT. Residue 195–202 participates in GTP binding; the sequence is GHVDHGKT. The G2 stretch occupies residues 220-224; that stretch reads GITQH. Residues 241 to 244 are G3; that stretch reads DTPG. GTP contacts are provided by residues 241 to 245 and 295 to 298; these read DTPGH and NKID. A G4 region spans residues 295–298; sequence NKID. The G5 stretch occupies residues 331 to 333; that stretch reads SAK.

It belongs to the TRAFAC class translation factor GTPase superfamily. Classic translation factor GTPase family. IF-2 subfamily.

Its subcellular location is the cytoplasm. Its function is as follows. One of the essential components for the initiation of protein synthesis. Protects formylmethionyl-tRNA from spontaneous hydrolysis and promotes its binding to the 30S ribosomal subunits. Also involved in the hydrolysis of GTP during the formation of the 70S ribosomal complex. This Clostridium botulinum (strain Alaska E43 / Type E3) protein is Translation initiation factor IF-2.